Here is a 327-residue protein sequence, read N- to C-terminus: Methionyl-tRNA formyltransferase (327 aa).

121-124 (SLLP) lines the (6S)-5,6,7,8-tetrahydrofolate pocket.

Belongs to the Fmt family.

The catalysed reaction is L-methionyl-tRNA(fMet) + (6R)-10-formyltetrahydrofolate = N-formyl-L-methionyl-tRNA(fMet) + (6S)-5,6,7,8-tetrahydrofolate + H(+). In terms of biological role, attaches a formyl group to the free amino group of methionyl-tRNA(fMet). The formyl group appears to play a dual role in the initiator identity of N-formylmethionyl-tRNA by promoting its recognition by IF2 and preventing the misappropriation of this tRNA by the elongation apparatus. This Burkholderia ambifaria (strain MC40-6) protein is Methionyl-tRNA formyltransferase.